A 210-amino-acid polypeptide reads, in one-letter code: Somatotropin (210 aa).

Positions 1-22 (MGQVFLLMPVLLVSCFLSQGAA) are cleaved as a signal peptide. H38 serves as a coordination point for Zn(2+). Cysteines 71 and 183 form a disulfide. E192 is a Zn(2+) binding site. A disulfide bridge connects residues C200 and C208.

Belongs to the somatotropin/prolactin family.

It is found in the secreted. Its function is as follows. Growth hormone plays an important role in growth control and is involved in the regulation of several anabolic processes. Implicated as an osmoregulatory substance important for seawater adaptation. This is Somatotropin (gh) from Oncorhynchus kisutch (Coho salmon).